The following is a 508-amino-acid chain: NADH-quinone oxidoreductase subunit N 1 (508 aa).

The next 13 membrane-spanning stretches (helical) occupy residues Ile-2–Leu-22, Ala-47–Val-67, Phe-87–Gly-107, Phe-126–Gly-146, Phe-175–Ala-195, Ala-220–Val-240, Phe-260–Ala-280, Ala-291–Ile-311, Met-321–Val-341, Val-351–Leu-371, Ala-396–Phe-416, Tyr-431–Val-453, and Leu-479–Ile-499.

The protein belongs to the complex I subunit 2 family. In terms of assembly, NDH-1 is composed of 14 different subunits. Subunits NuoA, H, J, K, L, M, N constitute the membrane sector of the complex.

The protein localises to the cell inner membrane. It carries out the reaction a quinone + NADH + 5 H(+)(in) = a quinol + NAD(+) + 4 H(+)(out). NDH-1 shuttles electrons from NADH, via FMN and iron-sulfur (Fe-S) centers, to quinones in the respiratory chain. The immediate electron acceptor for the enzyme in this species is believed to be ubiquinone. Couples the redox reaction to proton translocation (for every two electrons transferred, four hydrogen ions are translocated across the cytoplasmic membrane), and thus conserves the redox energy in a proton gradient. The polypeptide is NADH-quinone oxidoreductase subunit N 1 (Sorangium cellulosum (strain So ce56) (Polyangium cellulosum (strain So ce56))).